Consider the following 298-residue polypeptide: Probable phosphoserine phosphatase (298 aa).

Asp82 acts as the Nucleophile in catalysis. Asp82 and Asp84 together coordinate Mg(2+). Asp84 serves as the catalytic Proton donor. Residues Glu91, Arg127, 170 to 171, and Lys217 contribute to the substrate site; that span reads SG. A Mg(2+)-binding site is contributed by Asp240. Asn243 is a binding site for substrate.

Belongs to the HAD-like hydrolase superfamily. SerB family. Requires Mg(2+) as cofactor.

The enzyme catalyses O-phospho-L-serine + H2O = L-serine + phosphate. It catalyses the reaction O-phospho-D-serine + H2O = D-serine + phosphate. The protein operates within amino-acid biosynthesis; L-serine biosynthesis; L-serine from 3-phospho-D-glycerate: step 3/3. This Schizosaccharomyces pombe (strain 972 / ATCC 24843) (Fission yeast) protein is Probable phosphoserine phosphatase.